Reading from the N-terminus, the 324-residue chain is Cuticle collagen sqt-1 (324 aa).

Disordered stretches follow at residues 68 to 108 and 129 to 324; these read RRQY…TPNG and SGPK…YRNI. A compositionally biased stretch (pro residues) spans 87–97; the sequence is SAPPGQPPAVP. 3 triple-helical region regions span residues 127–153, 171–231, and 237–299; these read GPSG…PGVG, QGPV…KGRD, and GRPG…PGKD. 2 stretches are compositionally biased toward low complexity: residues 129-156 and 177-201; these read SGPK…GADD and PGAL…PGRD. Residues 227 to 236 are compositionally biased toward basic and acidic residues; sequence EKGRDAEHPI.

The protein belongs to the cuticular collagen family. In terms of assembly, collagen polypeptide chains are complexed within the cuticle by disulfide bonds and other types of covalent cross-links.

Its function is as follows. Nematode cuticles are composed largely of collagen-like proteins. The cuticle functions both as an exoskeleton and as a barrier to protect the worm from its environment. This is a collagen critical for organismal morphogenesis. Mutations in sqt-1 can lengthen, shorten, or helically twist the entire animal. In Caenorhabditis elegans, this protein is Cuticle collagen sqt-1 (sqt-1).